A 78-amino-acid polypeptide reads, in one-letter code: Omega-conotoxin-like ArMKLT1-011 (78 aa).

The first 22 residues, 1–22 (MKLTCMMIVAVLFLTAWTSVTA), serve as a signal peptide directing secretion. The propeptide occupies 23–48 (VNTRGELENLFLRASHEMNSEASKLD). 3 cysteine pairs are disulfide-bonded: Cys-52–Cys-69, Cys-59–Cys-73, and Cys-68–Cys-77.

The protein belongs to the conotoxin O1 superfamily. In terms of tissue distribution, expressed by the venom duct.

The protein localises to the secreted. Functionally, omega-conotoxins act at presynaptic membranes, they bind and block voltage-gated calcium channels (Cav). This is Omega-conotoxin-like ArMKLT1-011 from Conus arenatus (Sand-dusted cone).